The chain runs to 342 residues: Succinylglutamate desuccinylase (342 aa).

Zn(2+) contacts are provided by His63, Glu66, and His155. The active site involves Glu219.

The protein belongs to the AspA/AstE family. Succinylglutamate desuccinylase subfamily. The cofactor is Zn(2+).

It catalyses the reaction N-succinyl-L-glutamate + H2O = L-glutamate + succinate. The protein operates within amino-acid degradation; L-arginine degradation via AST pathway; L-glutamate and succinate from L-arginine: step 5/5. In terms of biological role, transforms N(2)-succinylglutamate into succinate and glutamate. The chain is Succinylglutamate desuccinylase from Vibrio vulnificus (strain CMCP6).